The chain runs to 405 residues: Deoxyguanosinetriphosphate triphosphohydrolase-like protein (405 aa).

An HD domain is found at 75-219 (RLTHTIEVAQ…AAIADDIAYN (145 aa)).

It belongs to the dGTPase family. Type 2 subfamily.

The sequence is that of Deoxyguanosinetriphosphate triphosphohydrolase-like protein from Rhizobium meliloti (strain 1021) (Ensifer meliloti).